Reading from the N-terminus, the 147-residue chain is Phosphoribosyl-AMP cyclohydrolase (147 aa).

Residue Asp-97 participates in Mg(2+) binding. Cys-98 lines the Zn(2+) pocket. Asp-99 and Asp-101 together coordinate Mg(2+). Positions 114 and 121 each coordinate Zn(2+).

This sequence belongs to the PRA-CH family. Homodimer. Mg(2+) is required as a cofactor. Zn(2+) serves as cofactor.

The protein resides in the cytoplasm. It carries out the reaction 1-(5-phospho-beta-D-ribosyl)-5'-AMP + H2O = 1-(5-phospho-beta-D-ribosyl)-5-[(5-phospho-beta-D-ribosylamino)methylideneamino]imidazole-4-carboxamide. The protein operates within amino-acid biosynthesis; L-histidine biosynthesis; L-histidine from 5-phospho-alpha-D-ribose 1-diphosphate: step 3/9. Catalyzes the hydrolysis of the adenine ring of phosphoribosyl-AMP. The protein is Phosphoribosyl-AMP cyclohydrolase of Hydrogenovibrio crunogenus (strain DSM 25203 / XCL-2) (Thiomicrospira crunogena).